Reading from the N-terminus, the 209-residue chain is Translation initiation factor 2 subunit beta (209 aa).

The 59-residue stretch at 144-202 (TIEEGKEYVVEITEVGSSGEGRTNYKGYTIFVPGAKRGETVKVRIKKVKNDVAIGEIIE) folds into the TRAM domain.

This sequence belongs to the eIF-2-beta/eIF-5 family. Heterotrimer composed of an alpha, a beta and a gamma chain.

EIF-2 functions in the early steps of protein synthesis by forming a ternary complex with GTP and initiator tRNA. The sequence is that of Translation initiation factor 2 subunit beta (eif2b) from Thermoplasma acidophilum (strain ATCC 25905 / DSM 1728 / JCM 9062 / NBRC 15155 / AMRC-C165).